A 104-amino-acid polypeptide reads, in one-letter code: uncharacterized protein (104 aa).

It is found in the mitochondrion. This is an uncharacterized protein from Claviceps purpurea (Ergot fungus).